The primary structure comprises 369 residues: Nuclear hormone receptor family member nhr-64 (369 aa).

Positions 67–142 (EKCQVDKAKR…ASTRGLRTTV (76 aa)) form a DNA-binding region, nuclear receptor. 2 NR C4-type zinc fingers span residues 70–90 (QVDKAKRNSCRKCRFDVCLRK) and 106–130 (PANPLSNGSNGGIVPDDPLLDTLIR). Residues 120-352 (PDDPLLDTLI…NLMLELMLPN (233 aa)) form the NR LBD domain.

The protein belongs to the nuclear hormone receptor family.

The protein resides in the nucleus. Its function is as follows. Orphan nuclear receptor. The sequence is that of Nuclear hormone receptor family member nhr-64 (nhr-64) from Caenorhabditis elegans.